A 321-amino-acid chain; its full sequence is Olfactory receptor 3A3 (321 aa).

The Extracellular portion of the chain corresponds to Met-1–Pro-34. N-linked (GlcNAc...) asparagine glycosylation occurs at Asn-14. The chain crosses the membrane as a helical span at residues Val-35–Val-58. Topologically, residues Leu-59–Ala-66 are cytoplasmic. The chain crosses the membrane as a helical span at residues Pro-67 to Pro-88. The Extracellular portion of the chain corresponds to Ala-89–Gln-109. Cys-106 and Cys-198 are disulfide-bonded. A helical membrane pass occupies residues Leu-110–Tyr-129. Residues Asp-130–Val-149 lie on the Cytoplasmic side of the membrane. A helical membrane pass occupies residues Gln-150–Thr-167. Over His-168–Glu-205 the chain is Extracellular. Residues Leu-206–Ala-228 traverse the membrane as a helical segment. The Cytoplasmic portion of the chain corresponds to His-229–Lys-245. The chain crosses the membrane as a helical span at residues Ala-246–Tyr-268. Residues Met-269–Lys-281 are Extracellular-facing. Residues Gly-282–Leu-301 traverse the membrane as a helical segment. Residues Arg-302–Thr-321 are Cytoplasmic-facing.

It belongs to the G-protein coupled receptor 1 family.

Its subcellular location is the cell membrane. Its function is as follows. Odorant receptor. This is Olfactory receptor 3A3 (OR3A3) from Homo sapiens (Human).